The chain runs to 205 residues: Holliday junction resolvase RecU (205 aa).

The Mg(2+) site is built by Thr83, Asp85, Glu98, and Gln117.

This sequence belongs to the RecU family. Requires Mg(2+) as cofactor.

It is found in the cytoplasm. The catalysed reaction is Endonucleolytic cleavage at a junction such as a reciprocal single-stranded crossover between two homologous DNA duplexes (Holliday junction).. Its function is as follows. Endonuclease that resolves Holliday junction intermediates in genetic recombination. Cleaves mobile four-strand junctions by introducing symmetrical nicks in paired strands. Promotes annealing of linear ssDNA with homologous dsDNA. Required for DNA repair, homologous recombination and chromosome segregation. This Streptococcus suis (strain 98HAH33) protein is Holliday junction resolvase RecU.